Reading from the N-terminus, the 522-residue chain is Cytochrome P450 4e5, mitochondrial (522 aa).

The heme site is built by Glu-307 and Cys-443.

This sequence belongs to the cytochrome P450 family. Heme serves as cofactor.

The protein localises to the mitochondrion. Its function is as follows. Probably involved in steroid hormones biosynthesis. The chain is Cytochrome P450 4e5, mitochondrial (Cyp4e5) from Drosophila mettleri (Fruit fly).